A 124-amino-acid chain; its full sequence is MEKNELKVIRGKPEQQKMDISTVEVKNNNIEKLKIGCEAKKTTDRVENSGNGTGSISAPLTDLGPSIGDSHENKGADIPIHPPLDTQSHAKDDDWYDILVITADYEFPKNPANEDVKEERTQGD.

The segment at 44 to 92 (DRVENSGNGTGSISAPLTDLGPSIGDSHENKGADIPIHPPLDTQSHAKD) is disordered. Over residues 48 to 58 (NSGNGTGSISA) the composition is skewed to polar residues.

This is an uncharacterized protein from Caenorhabditis elegans.